Reading from the N-terminus, the 235-residue chain is Phosphoribosylaminoimidazole-succinocarboxamide synthase (235 aa).

It belongs to the SAICAR synthetase family.

It catalyses the reaction 5-amino-1-(5-phospho-D-ribosyl)imidazole-4-carboxylate + L-aspartate + ATP = (2S)-2-[5-amino-1-(5-phospho-beta-D-ribosyl)imidazole-4-carboxamido]succinate + ADP + phosphate + 2 H(+). Its pathway is purine metabolism; IMP biosynthesis via de novo pathway; 5-amino-1-(5-phospho-D-ribosyl)imidazole-4-carboxamide from 5-amino-1-(5-phospho-D-ribosyl)imidazole-4-carboxylate: step 1/2. The polypeptide is Phosphoribosylaminoimidazole-succinocarboxamide synthase (Streptococcus pneumoniae (strain ATCC 700669 / Spain 23F-1)).